The chain runs to 47 residues: MRNKAHGFPHRISFDGEPDRAKHASKRANGTINTKPQERMHQANPDQ.

Residues 1-47 (MRNKAHGFPHRISFDGEPDRAKHASKRANGTINTKPQERMHQANPDQ) are disordered. Over residues 12-22 (ISFDGEPDRAK) the composition is skewed to basic and acidic residues.

The protein belongs to the SspK family.

Its subcellular location is the spore core. In Halalkalibacterium halodurans (strain ATCC BAA-125 / DSM 18197 / FERM 7344 / JCM 9153 / C-125) (Bacillus halodurans), this protein is Small, acid-soluble spore protein K.